The following is a 1052-amino-acid chain: Calmin (1052 aa).

The actin-binding stretch occupies residues 1–288 (MAAQEWDWFQ…IVTYVAQFLE (288 aa)). The 108-residue stretch at 32–139 (NVQKRTFTRW…LIWNIILFFQ (108 aa)) folds into the Calponin-homology (CH) 1 domain. Low complexity predominate over residues 148-168 (SRSSPSSSLSPGSGGTDSDSS). Residues 148–178 (SRSSPSSSLSPGSGGTDSDSSYPPTPTTERS) are disordered. Residues 187-291 (RKAIKTLLSW…YVAQFLERFP (105 aa)) enclose the Calponin-homology (CH) 2 domain. 4 disordered regions span residues 391–420 (STGK…SNSL), 455–545 (KATK…TLLA), 585–727 (STSQ…SPPL), and 758–929 (GEDL…DSSI). Composition is skewed to basic and acidic residues over residues 455-465 (KATKELSKQDG) and 472-495 (VSKE…DKVP). Positions 509–529 (AQPSQDSSFCNGTVESPSSQG) are enriched in polar residues. Serine 537 carries the post-translational modification Phosphoserine. Basic and acidic residues-rich tracts occupy residues 594-614 (PSSH…AEKP), 622-651 (PRAE…EDQG), and 659-669 (PADKKPKVYEK). Serine 679 is modified (phosphoserine). Threonine 710 carries the phosphothreonine modification. The span at 711–720 (LRSHSEEGLD) shows a compositional bias: basic and acidic residues. Phosphoserine is present on serine 724. Over residues 759 to 773 (EDLKSEDTDLEHPED) the composition is skewed to basic and acidic residues. Residues 780–791 (REEEADEDEEEA) show a composition bias toward acidic residues. The segment covering 792–801 (QSSQSSCSFS) has biased composition (low complexity). Positions 836 to 849 (SHEDHQPKETKENG) are enriched in basic and acidic residues. Serine 856 carries the phosphoserine modification. Residues 880–889 (SKKKEKRKHM) are compositionally biased toward basic residues. Residue serine 925 is modified to Phosphoserine. Residues 1027 to 1047 (VIYFILFLWLLVYCLLLFPQL) form a helical; Anchor for type IV membrane protein membrane-spanning segment.

As to expression, expressed in testis. Expressed during testis maturation process and in maturing spermatids. In brain, it is expressed in neurons of the hippocampus, cerebral cortex, and thalamus, Purkinje cells, and also in the choroid plexus and ependymal cells. Expressed predominantly in dendrites and cell bodies of the neurons, but not in axons. The level of expression increases during the period of maturation of the mouse brain after birth.

It localises to the membrane. It is found in the cytoplasm. The polypeptide is Calmin (Clmn) (Mus musculus (Mouse)).